The following is a 664-amino-acid chain: NAD(P)H-quinone oxidoreductase chain 5 (664 aa).

The next 16 membrane-spanning stretches (helical) occupy residues 7-27, 39-59, 91-111, 120-140, 144-164, 187-207, 219-239, 258-278, 290-310, 327-347, 352-372, 395-415, 420-440, 495-515, 541-561, and 643-663; these read YAWL…IGLI, LNAV…FGLL, HLSA…MIYT, GYVR…GLVF, LVQV…LIGF, FGLL…EFDL, GQIS…GPVA, TPIS…FLVA, AMNV…TIAL, LGYM…FHLM, FKAM…EVVG, ATTF…AGFW, ILGL…ATAG, FPLM…VPWG, FLIM…IASL, and VQFY…FFSV.

The protein belongs to the complex I subunit 5 family.

It is found in the cell membrane. It catalyses the reaction a plastoquinone + NADH + (n+1) H(+)(in) = a plastoquinol + NAD(+) + n H(+)(out). The catalysed reaction is a plastoquinone + NADPH + (n+1) H(+)(in) = a plastoquinol + NADP(+) + n H(+)(out). Its function is as follows. NDH-1 shuttles electrons from NAD(P)H, via FMN and iron-sulfur (Fe-S) centers, to quinones in the respiratory chain. The immediate electron acceptor for the enzyme in this species is believed to be plastoquinone. Couples the redox reaction to proton translocation (for every two electrons transferred, four hydrogen ions are translocated across the cytoplasmic membrane), and thus conserves the redox energy in a proton gradient. The sequence is that of NAD(P)H-quinone oxidoreductase chain 5 (ndhF) from Picosynechococcus sp. (strain ATCC 27264 / PCC 7002 / PR-6) (Agmenellum quadruplicatum).